The chain runs to 855 residues: Spindle and centriole-associated protein 1 (855 aa).

The disordered stretch occupies residues Gln164 to Thr200. A Phosphothreonine modification is found at Thr235. Basic residues predominate over residues Lys300–Lys311. The interval Lys300–Asn328 is disordered. Residues Leu314 to Asn328 are compositionally biased toward polar residues. Residues Asn325 to Val437 are a coiled coil. 2 positions are modified to phosphoserine: Ser640 and Ser644. Residues Gly725–Gln751 adopt a coiled-coil conformation. Residues Ser760, Ser764, and Ser819 each carry the phosphoserine modification. The interval Glu789–Asn834 is disordered. Over residues Ser794–Gly828 the composition is skewed to polar residues.

As to quaternary structure, interacts with CEP120.

It localises to the cytoplasm. The protein localises to the cytoskeleton. The protein resides in the microtubule organizing center. It is found in the centrosome. Its subcellular location is the centriole. It localises to the spindle. Its function is as follows. Regulator required for centriole duplication, for proper bipolar spindle formation and chromosome congression in mitosis. The chain is Spindle and centriole-associated protein 1 (SPICE1) from Pongo abelii (Sumatran orangutan).